A 427-amino-acid polypeptide reads, in one-letter code: Galactose-3-O-sulfotransferase 3 (427 aa).

Topologically, residues 1-19 (MPPIFQRLQQATKMSRRKI) are cytoplasmic. Residues 20–40 (LLLVLGCSTLSLLIHQGAQLS) form a helical; Signal-anchor for type II membrane protein membrane-spanning segment. The Lumenal segment spans residues 41-427 (WYPKLFPLSC…RPIRALRPGH (387 aa)). N-linked (GlcNAc...) asparagine glycosylation is found at N90, N109, N176, and N301. The disordered stretch occupies residues 404-427 (MRLRPEPVLDNPPPRPIRALRPGH).

This sequence belongs to the galactose-3-O-sulfotransferase family. Mg(2+) is required as a cofactor.

It is found in the golgi apparatus. It localises to the golgi stack membrane. It functions in the pathway protein modification; carbohydrate sulfation. Its function is as follows. Transfers a sulfate to position 3 of non-reducing beta-galactosyl residues in N-glycans and core2-branched O-glycans. Has high activity towards Gal-beta-1,4-GlcNAc, Gal-beta-1,4(Fuc-alpha-1,3)GlcNAc and lower activity towards Gal-beta-1,3(Fuc-alpha-1,4)GlcNAc. This Bos taurus (Bovine) protein is Galactose-3-O-sulfotransferase 3 (GAL3ST3).